The following is a 392-amino-acid chain: Chaperone protein DnaJ 2 (392 aa).

Residues 10-75 form the J domain; that stretch reads DFYKELGVSS…AKRKEYDETR (66 aa). The segment at 161–239 adopts a CR-type zinc-finger fold; the sequence is GVAMPLRLTS…CKGTGVTTRT (79 aa). Cysteine 174, cysteine 177, cysteine 191, cysteine 194, cysteine 213, cysteine 216, cysteine 227, and cysteine 230 together coordinate Zn(2+). 4 CXXCXGXG motif repeats span residues 174-181, 191-198, 213-220, and 227-234; these read CTNCHGSG, CPTCNGSG, CTDCRGSG, and CDECKGTG.

Belongs to the DnaJ family. As to quaternary structure, homodimer. The cofactor is Zn(2+).

The protein localises to the cytoplasm. Functionally, participates actively in the response to hyperosmotic and heat shock by preventing the aggregation of stress-denatured proteins and by disaggregating proteins, also in an autonomous, DnaK-independent fashion. Unfolded proteins bind initially to DnaJ; upon interaction with the DnaJ-bound protein, DnaK hydrolyzes its bound ATP, resulting in the formation of a stable complex. GrpE releases ADP from DnaK; ATP binding to DnaK triggers the release of the substrate protein, thus completing the reaction cycle. Several rounds of ATP-dependent interactions between DnaJ, DnaK and GrpE are required for fully efficient folding. Also involved, together with DnaK and GrpE, in the DNA replication of plasmids through activation of initiation proteins. The protein is Chaperone protein DnaJ 2 of Mycolicibacterium paratuberculosis (strain ATCC BAA-968 / K-10) (Mycobacterium paratuberculosis).